The sequence spans 458 residues: ATP synthase subunit beta (458 aa).

148–155 is an ATP binding site; it reads GGAGVGKT.

The protein belongs to the ATPase alpha/beta chains family. In terms of assembly, F-type ATPases have 2 components, CF(1) - the catalytic core - and CF(0) - the membrane proton channel. CF(1) has five subunits: alpha(3), beta(3), gamma(1), delta(1), epsilon(1). CF(0) has three main subunits: a(1), b(2) and c(9-12). The alpha and beta chains form an alternating ring which encloses part of the gamma chain. CF(1) is attached to CF(0) by a central stalk formed by the gamma and epsilon chains, while a peripheral stalk is formed by the delta and b chains.

The protein resides in the cell inner membrane. The enzyme catalyses ATP + H2O + 4 H(+)(in) = ADP + phosphate + 5 H(+)(out). Produces ATP from ADP in the presence of a proton gradient across the membrane. The catalytic sites are hosted primarily by the beta subunits. The protein is ATP synthase subunit beta of Pseudomonas entomophila (strain L48).